The sequence spans 807 residues: Glycerol-3-phosphate acyltransferase (807 aa).

The short motif at 308-313 is the HXXXXD motif element; that stretch reads CHRSHM.

Belongs to the GPAT/DAPAT family.

The protein resides in the cell inner membrane. It carries out the reaction sn-glycerol 3-phosphate + an acyl-CoA = a 1-acyl-sn-glycero-3-phosphate + CoA. It functions in the pathway phospholipid metabolism; CDP-diacylglycerol biosynthesis; CDP-diacylglycerol from sn-glycerol 3-phosphate: step 1/3. The chain is Glycerol-3-phosphate acyltransferase from Shewanella denitrificans (strain OS217 / ATCC BAA-1090 / DSM 15013).